The primary structure comprises 311 residues: Probable manganese-dependent inorganic pyrophosphatase (311 aa).

Mn(2+)-binding residues include His-9, Asp-13, Asp-15, Asp-75, His-97, and Asp-149.

This sequence belongs to the PPase class C family. Requires Mn(2+) as cofactor.

It localises to the cytoplasm. It catalyses the reaction diphosphate + H2O = 2 phosphate + H(+). In Lactobacillus delbrueckii subsp. bulgaricus (strain ATCC BAA-365 / Lb-18), this protein is Probable manganese-dependent inorganic pyrophosphatase.